A 165-amino-acid chain; its full sequence is Xanthine-guanine phosphoribosyltransferase (165 aa).

5-phospho-alpha-D-ribose 1-diphosphate-binding positions include R41–G42 and D98–T106. D99 contributes to the Mg(2+) binding site. 2 residues coordinate guanine: D102 and I145. Positions 102 and 145 each coordinate xanthine. Residues D102–T106 and W144–I145 each bind GMP.

Belongs to the purine/pyrimidine phosphoribosyltransferase family. XGPT subfamily. In terms of assembly, homotetramer. It depends on Mg(2+) as a cofactor.

It is found in the cell inner membrane. The catalysed reaction is GMP + diphosphate = guanine + 5-phospho-alpha-D-ribose 1-diphosphate. It carries out the reaction XMP + diphosphate = xanthine + 5-phospho-alpha-D-ribose 1-diphosphate. It catalyses the reaction IMP + diphosphate = hypoxanthine + 5-phospho-alpha-D-ribose 1-diphosphate. It participates in purine metabolism; GMP biosynthesis via salvage pathway; GMP from guanine: step 1/1. It functions in the pathway purine metabolism; XMP biosynthesis via salvage pathway; XMP from xanthine: step 1/1. Functionally, purine salvage pathway enzyme that catalyzes the transfer of the ribosyl-5-phosphate group from 5-phospho-alpha-D-ribose 1-diphosphate (PRPP) to the N9 position of the 6-oxopurines guanine and xanthine to form the corresponding ribonucleotides GMP (guanosine 5'-monophosphate) and XMP (xanthosine 5'-monophosphate), with the release of PPi. To a lesser extent, also acts on hypoxanthine. This chain is Xanthine-guanine phosphoribosyltransferase, found in Agrobacterium fabrum (strain C58 / ATCC 33970) (Agrobacterium tumefaciens (strain C58)).